The chain runs to 319 residues: tRNA dimethylallyltransferase (319 aa).

ATP is bound at residue 15–22; the sequence is GPTASGKS. 17-22 contacts substrate; the sequence is TASGKS. 2 interaction with substrate tRNA regions span residues 40 to 43 and 164 to 168; these read DSRQ and QRLVR.

It belongs to the IPP transferase family. In terms of assembly, monomer. Requires Mg(2+) as cofactor.

The catalysed reaction is adenosine(37) in tRNA + dimethylallyl diphosphate = N(6)-dimethylallyladenosine(37) in tRNA + diphosphate. Functionally, catalyzes the transfer of a dimethylallyl group onto the adenine at position 37 in tRNAs that read codons beginning with uridine, leading to the formation of N6-(dimethylallyl)adenosine (i(6)A). This Chlorobium phaeobacteroides (strain DSM 266 / SMG 266 / 2430) protein is tRNA dimethylallyltransferase.